Reading from the N-terminus, the 304-residue chain is Cell surface-binding protein OPG105 (304 aa).

Residues M1–G235 enclose the Alpha-carbonic anhydrase domain. Residues M1–T275 lie on the Virion surface side of the membrane. The chain crosses the membrane as a helical span at residues F276–M294. Topologically, residues S295–N304 are intravirion.

Belongs to the alpha-carbonic anhydrase family. As to quaternary structure, homodimer; disulfide-linked. In terms of processing, apparently non-glycosylated.

The protein resides in the virion membrane. Binds to chondroitin sulfate on the cell surface to provide virion attachment to target cell. The polypeptide is Cell surface-binding protein OPG105 (OPG105) (Vaccinia virus (strain Copenhagen) (VACV)).